Here is a 180-residue protein sequence, read N- to C-terminus: Ferric nitrobindin-like protein (180 aa).

Positions 21-27 (GRWEGAG) match the GXWXGXG motif.

The protein belongs to the nitrobindin family.

This Kineococcus radiotolerans (strain ATCC BAA-149 / DSM 14245 / SRS30216) protein is Ferric nitrobindin-like protein.